The primary structure comprises 159 residues: NAD(P)H-quinone oxidoreductase subunit N (159 aa).

This sequence belongs to the complex I NdhN subunit family. NDH-1 can be composed of about 15 different subunits; different subcomplexes with different compositions have been identified which probably have different functions.

The protein resides in the cell inner membrane. It carries out the reaction a plastoquinone + NADH + (n+1) H(+)(in) = a plastoquinol + NAD(+) + n H(+)(out). It catalyses the reaction a plastoquinone + NADPH + (n+1) H(+)(in) = a plastoquinol + NADP(+) + n H(+)(out). In terms of biological role, NDH-1 shuttles electrons from an unknown electron donor, via FMN and iron-sulfur (Fe-S) centers, to quinones in the respiratory and/or the photosynthetic chain. The immediate electron acceptor for the enzyme in this species is believed to be plastoquinone. Couples the redox reaction to proton translocation, and thus conserves the redox energy in a proton gradient. Cyanobacterial NDH-1 also plays a role in inorganic carbon-concentration. The polypeptide is NAD(P)H-quinone oxidoreductase subunit N (Gloeobacter violaceus (strain ATCC 29082 / PCC 7421)).